Consider the following 1040-residue polypeptide: Tudor domain-containing protein 5 (1040 aa).

3 HTH OST-type domains span residues 7–80 (IQDC…KAIP), 122–197 (VPPI…LKKS), and 291–365 (VDPE…FDAD). One can recognise a Tudor domain in the interval 533–592 (FIQPGHLCCVKISEDKWWYRVIIHRILGKKEVEVFYPDFGNIGTVQKSSLRFLKCCYTKL). Ser809 carries the phosphoserine modification. Disordered stretches follow at residues 857–891 (DVKG…YPLD) and 912–975 (AERS…AKDK). Polar residues-rich tracts occupy residues 872 to 891 (EKNT…YPLD) and 912 to 924 (AERS…SIQT). Phosphoserine is present on Ser943. Positions 946 to 956 (NHSGSVESSPG) are enriched in polar residues. Residues 958–975 (LKKEDVSNSRAEATAKDK) are compositionally biased toward basic and acidic residues.

It belongs to the TDRD5 family. As to expression, gonad-specific. Mainly expressed in testis. Present at low level in ovary (at protein level).

The protein localises to the cytoplasm. Functionally, required during spermiogenesis to participate in the repression transposable elements and prevent their mobilization, which is essential for the germline integrity. Probably acts via the piRNA metabolic process, which mediates the repression of transposable elements during meiosis by forming complexes composed of piRNAs and Piwi proteins and govern the methylation and subsequent repression of transposons. Required for chromatoid body (CB) assembly. This Mus musculus (Mouse) protein is Tudor domain-containing protein 5 (Tdrd5).